The sequence spans 181 residues: ATP synthase subunit b, chloroplastic (181 aa).

The helical transmembrane segment at 31–50 threads the bilayer; that stretch reads NVLNIAILLSGVVYLGRNFL.

It belongs to the ATPase B chain family. In terms of assembly, F-type ATPases have 2 components, F(1) - the catalytic core - and F(0) - the membrane proton channel. F(1) has five subunits: alpha(3), beta(3), gamma(1), delta(1), epsilon(1). F(0) has four main subunits: a(1), b(1), b'(1) and c(10-14). The alpha and beta chains form an alternating ring which encloses part of the gamma chain. F(1) is attached to F(0) by a central stalk formed by the gamma and epsilon chains, while a peripheral stalk is formed by the delta, b and b' chains.

The protein resides in the plastid. It localises to the chloroplast thylakoid membrane. In terms of biological role, f(1)F(0) ATP synthase produces ATP from ADP in the presence of a proton or sodium gradient. F-type ATPases consist of two structural domains, F(1) containing the extramembraneous catalytic core and F(0) containing the membrane proton channel, linked together by a central stalk and a peripheral stalk. During catalysis, ATP synthesis in the catalytic domain of F(1) is coupled via a rotary mechanism of the central stalk subunits to proton translocation. Component of the F(0) channel, it forms part of the peripheral stalk, linking F(1) to F(0). This chain is ATP synthase subunit b, chloroplastic, found in Rhodomonas salina (Cryptomonas salina).